Here is a 354-residue protein sequence, read N- to C-terminus: 3-isopropylmalate dehydrogenase (354 aa).

Residue 73 to 86 coordinates NAD(+); the sequence is GPAYDKLDRPLRPE. 4 residues coordinate substrate: Arg93, Arg103, Arg131, and Asp221. Mg(2+)-binding residues include Asp221, Asp245, and Asp249. 279 to 291 provides a ligand contact to NAD(+); that stretch reads GSAPDIAGQNLAN.

This sequence belongs to the isocitrate and isopropylmalate dehydrogenases family. LeuB type 1 subfamily. In terms of assembly, homodimer. Mg(2+) is required as a cofactor. Mn(2+) serves as cofactor.

The protein localises to the cytoplasm. It carries out the reaction (2R,3S)-3-isopropylmalate + NAD(+) = 4-methyl-2-oxopentanoate + CO2 + NADH. Its pathway is amino-acid biosynthesis; L-leucine biosynthesis; L-leucine from 3-methyl-2-oxobutanoate: step 3/4. In terms of biological role, catalyzes the oxidation of 3-carboxy-2-hydroxy-4-methylpentanoate (3-isopropylmalate) to 3-carboxy-4-methyl-2-oxopentanoate. The product decarboxylates to 4-methyl-2 oxopentanoate. In Chromobacterium violaceum (strain ATCC 12472 / DSM 30191 / JCM 1249 / CCUG 213 / NBRC 12614 / NCIMB 9131 / NCTC 9757 / MK), this protein is 3-isopropylmalate dehydrogenase.